A 432-amino-acid polypeptide reads, in one-letter code: Enolase (432 aa).

A (2R)-2-phosphoglycerate-binding site is contributed by Gln167. Glu209 (proton donor) is an active-site residue. Mg(2+)-binding residues include Asp246, Glu287, and Asp314. Lys339, Arg368, Ser369, and Lys390 together coordinate (2R)-2-phosphoglycerate. Lys339 serves as the catalytic Proton acceptor.

This sequence belongs to the enolase family. Requires Mg(2+) as cofactor.

It localises to the cytoplasm. The protein localises to the secreted. It is found in the cell surface. It catalyses the reaction (2R)-2-phosphoglycerate = phosphoenolpyruvate + H2O. It functions in the pathway carbohydrate degradation; glycolysis; pyruvate from D-glyceraldehyde 3-phosphate: step 4/5. Catalyzes the reversible conversion of 2-phosphoglycerate (2-PG) into phosphoenolpyruvate (PEP). It is essential for the degradation of carbohydrates via glycolysis. This is Enolase from Prochlorococcus marinus (strain SARG / CCMP1375 / SS120).